Here is a 380-residue protein sequence, read N- to C-terminus: Flap endonuclease 1-A (380 aa).

An N-domain region spans residues 1 to 105 (MGIKGLTKLL…QELAKRYSKR (105 aa)). Residue D34 participates in Mg(2+) binding. DNA is bound at residue R71. Mg(2+) contacts are provided by D87, E159, E161, D180, and D182. The tract at residues 123 to 254 (AIEKFSKRTV…QTALKLIRQH (132 aa)) is I-domain. DNA is bound at residue E159. DNA-binding residues include G232 and D234. D234 contacts Mg(2+). Positions 336-344 (SQGRLESFF) are interaction with PCNA. The disordered stretch occupies residues 351–380 (SVPLKRKDTSEKPTKAVANKKTKGAGGKKK). Residues 355-364 (KRKDTSEKPT) show a composition bias toward basic and acidic residues. Residues 368-380 (ANKKTKGAGGKKK) show a composition bias toward basic residues.

It belongs to the XPG/RAD2 endonuclease family. FEN1 subfamily. As to quaternary structure, interacts with PCNA. Three molecules of FEN1 bind to one PCNA trimer with each molecule binding to one PCNA monomer. PCNA stimulates the nuclease activity without altering cleavage specificity. It depends on Mg(2+) as a cofactor. Post-translationally, phosphorylated. Phosphorylation upon DNA damage induces relocalization to the nuclear plasma. In terms of tissue distribution, strongly expressed in proliferating tissues: root and shoot apical meristem, tiller bud, leaf, ligule primordia, marginal meristem of young leaves and panicles. Not expressed in mature leaves when exposed to UV.

The protein localises to the nucleus. It localises to the nucleolus. The protein resides in the nucleoplasm. It is found in the mitochondrion. Its activity is regulated as follows. Inhibited by NaCl. Structure-specific nuclease with 5'-flap endonuclease and 5'-3' exonuclease activities involved in DNA replication and repair. During DNA replication, cleaves the 5'-overhanging flap structure that is generated by displacement synthesis when DNA polymerase encounters the 5'-end of a downstream Okazaki fragment. It enters the flap from the 5'-end and then tracks to cleave the flap base, leaving a nick for ligation. Also involved in the long patch base excision repair (LP-BER) pathway, by cleaving within the apurinic/apyrimidinic (AP) site-terminated flap. Acts as a genome stabilization factor that prevents flaps from equilibrating into structures that lead to duplications and deletions. Also possesses 5'-3' exonuclease activity on nicked or gapped double-stranded DNA, and exhibits RNase H activity. Also involved in replication and repair of rDNA and in repairing mitochondrial DNA. May be required for cell proliferation. This Oryza sativa subsp. japonica (Rice) protein is Flap endonuclease 1-A.